The sequence spans 727 residues: Polyribonucleotide nucleotidyltransferase (727 aa).

Residues aspartate 488 and aspartate 494 each coordinate Mg(2+). One can recognise a KH domain in the interval proline 555–isoleucine 614. The region spanning glycine 624 to lysine 692 is the S1 motif domain. The disordered stretch occupies residues methionine 691 to glutamine 727. Residues proline 707 to glycine 720 are compositionally biased toward basic and acidic residues.

The protein belongs to the polyribonucleotide nucleotidyltransferase family. The cofactor is Mg(2+).

The protein resides in the cytoplasm. The catalysed reaction is RNA(n+1) + phosphate = RNA(n) + a ribonucleoside 5'-diphosphate. Functionally, involved in mRNA degradation. Catalyzes the phosphorolysis of single-stranded polyribonucleotides processively in the 3'- to 5'-direction. The sequence is that of Polyribonucleotide nucleotidyltransferase from Acidovorax ebreus (strain TPSY) (Diaphorobacter sp. (strain TPSY)).